Reading from the N-terminus, the 166-residue chain is Cofilin-1 (166 aa).

At A2 the chain carries N-acetylalanine. A phosphoserine mark is found at S3 and S8. The ADF-H domain maps to 4 to 153 (GVAVSDGVIK…KDRCTLAEKL (150 aa)). N6-acetyllysine is present on K13. T25 is subject to Phosphothreonine. The short motif at 30-34 (KKRKK) is the Nuclear localization signal element. S41 is modified (phosphoserine). Phosphotyrosine is present on Y68. K73 is modified (N6-acetyllysine). K132 participates in a covalent cross-link: Glycyl lysine isopeptide (Lys-Gly) (interchain with G-Cter in SUMO2). At Y140 the chain carries Phosphotyrosine. At K144 the chain carries N6-acetyllysine. Phosphoserine is present on S156.

It belongs to the actin-binding proteins ADF family. Can bind G- and F-actin in a 1:1 ratio of cofilin to actin. It is a major component of intranuclear and cytoplasmic actin rods. Interacts with the subcortical maternal complex (SCMC) via interaction with TLE6 and NLRP5. Interacts with C9orf72. In terms of processing, inactivated by phosphorylation on Ser-3. Phosphorylated on Ser-3 in resting cells. Dephosphorylated by PDXP/chronophin; this restores its activity in promoting actin filament depolymerization. The phosphorylation of Ser-24 may prevent recognition of the nuclear localization signal. Phosphorylated via a ARRB1-RAC1-LIMK1-PAK1 cascade upon active ligand stimulation of atypical chemokine receptor ACKR2.

It localises to the nucleus matrix. Its subcellular location is the cytoplasm. The protein localises to the cytoskeleton. It is found in the cell projection. The protein resides in the ruffle membrane. It localises to the lamellipodium membrane. Its subcellular location is the lamellipodium. The protein localises to the growth cone. It is found in the axon. In terms of biological role, binds to F-actin and exhibits pH-sensitive F-actin depolymerizing activity. Important for normal progress through mitosis and normal cytokinesis. In conjunction with the subcortical maternal complex (SCMC), plays an essential role for zygotes to progress beyond the first embryonic cell divisions via regulation of actin dynamics. Required for the centralization of the mitotic spindle and symmetric division of zygotes. Plays a role in the regulation of cell morphology and cytoskeletal organization in epithelial cells. Required for the up-regulation of atypical chemokine receptor ACKR2 from endosomal compartment to cell membrane, increasing its efficiency in chemokine uptake and degradation. Required for neural tube morphogenesis and neural crest cell migration. The chain is Cofilin-1 (CFL1) from Bos taurus (Bovine).